A 507-amino-acid chain; its full sequence is ATP synthase subunit alpha, chloroplastic (507 aa).

170–177 is an ATP binding site; that stretch reads GDRQTGKT.

This sequence belongs to the ATPase alpha/beta chains family. F-type ATPases have 2 components, CF(1) - the catalytic core - and CF(0) - the membrane proton channel. CF(1) has five subunits: alpha(3), beta(3), gamma(1), delta(1), epsilon(1). CF(0) has four main subunits: a, b, b' and c.

It localises to the plastid. The protein localises to the chloroplast thylakoid membrane. The enzyme catalyses ATP + H2O + 4 H(+)(in) = ADP + phosphate + 5 H(+)(out). Produces ATP from ADP in the presence of a proton gradient across the membrane. The alpha chain is a regulatory subunit. This is ATP synthase subunit alpha, chloroplastic from Piper cenocladum (Ant piper).